The chain runs to 335 residues: Anthranilate phosphoribosyltransferase (335 aa).

Residues G79, 82–83 (GD), S87, 89–92 (NIST), 107–115 (KHGNRSISS), and S119 each bind 5-phospho-alpha-D-ribose 1-diphosphate. Position 79 (G79) interacts with anthranilate. Residue S91 participates in Mg(2+) binding. Residue N110 participates in anthranilate binding. An anthranilate-binding site is contributed by R165. Mg(2+) is bound by residues D224 and E225.

The protein belongs to the anthranilate phosphoribosyltransferase family. In terms of assembly, homodimer. It depends on Mg(2+) as a cofactor.

The enzyme catalyses N-(5-phospho-beta-D-ribosyl)anthranilate + diphosphate = 5-phospho-alpha-D-ribose 1-diphosphate + anthranilate. It participates in amino-acid biosynthesis; L-tryptophan biosynthesis; L-tryptophan from chorismate: step 2/5. Its function is as follows. Catalyzes the transfer of the phosphoribosyl group of 5-phosphorylribose-1-pyrophosphate (PRPP) to anthranilate to yield N-(5'-phosphoribosyl)-anthranilate (PRA). The sequence is that of Anthranilate phosphoribosyltransferase from Streptococcus mutans serotype c (strain ATCC 700610 / UA159).